A 405-amino-acid chain; its full sequence is Serine/threonine-protein kinase 2 (405 aa).

One can recognise a Protein kinase domain in the interval 54 to 405 (NDDFYHISTG…IFSDWINGGN (352 aa)). ATP is bound by residues 60–68 (ISTGGYGIV) and Lys-84. The active-site Proton acceptor is Asp-274.

This sequence belongs to the protein kinase superfamily. Ser/Thr protein kinase family. Poxviruses subfamily. In terms of processing, phosphorylated in vivo. Autophosphorylated in vitro.

It is found in the host endoplasmic reticulum. The protein localises to the host endoplasmic reticulum-Golgi intermediate compartment. The catalysed reaction is L-seryl-[protein] + ATP = O-phospho-L-seryl-[protein] + ADP + H(+). It carries out the reaction L-threonyl-[protein] + ATP = O-phospho-L-threonyl-[protein] + ADP + H(+). In terms of biological role, essential serine-protein kinase involved in the early stage of virion morphogenesis. The sequence is that of Serine/threonine-protein kinase 2 (OPG054) from Vaccinia virus (strain L-IVP) (VACV).